The chain runs to 426 residues: Interferon regulatory factor 8 (426 aa).

The IRF tryptophan pentad repeat DNA-binding region spans 7–114 (GRRLRQWLIE…EPYKVYRIVP (108 aa)).

Belongs to the IRF family. As to quaternary structure, interacts (via C-terminus) with TRIM21 (via C-terminus). Interacts with the BATF-JUNB heterodimer. Interacts with BATF (via bZIP domain); the interaction is direct. Interacts with COPS2. Interacts with SPI1. In terms of processing, ubiquitinated. Ubiquitination by TRIM21 in macrophages, a process that is strongly increased upon interferon gamma stimulation, leds to the enhanced transcriptional activity of target cytokine genes. Ubiquitination leads to its degradation by the proteasome. Sumoylated with SUMO3. Desumoylated by SENP1. Predominantly expressed in lymphoid tissues.

Its subcellular location is the nucleus. The protein localises to the cytoplasm. Its function is as follows. Transcription factor that specifically binds to the upstream regulatory region of type I interferon (IFN) and IFN-inducible MHC class I genes (the interferon consensus sequence (ICS)). Can both act as a transcriptional activator or repressor. Plays a negative regulatory role in cells of the immune system. Involved in CD8(+) dendritic cell differentiation by forming a complex with the BATF-JUNB heterodimer in immune cells, leading to recognition of AICE sequence (5'-TGAnTCA/GAAA-3'), an immune-specific regulatory element, followed by cooperative binding of BATF and IRF8 and activation of genes. Required for the development of plasmacytoid dendritic cells (pDCs), which produce most of the type I IFN in response to viral infection. Positively regulates macroautophagy in dendritic cells. Acts as a transcriptional repressor of osteoclast differentiation factors such as NFATC1 and EEIG1. The polypeptide is Interferon regulatory factor 8 (Homo sapiens (Human)).